Reading from the N-terminus, the 220-residue chain is Adenylate kinase (220 aa).

12–17 (GAGKGT) contributes to the ATP binding site. Residues 32 to 62 (STGDIFRDIVKKENDELGKKIKEIMEKGELV) form an NMP region. Residues threonine 33, arginine 38, 60–62 (ELV), 88–91 (GYPR), and glutamine 95 contribute to the AMP site. Positions 129-166 (SRRICPKCGRIYNMISLPPKEDELCDDCKVKLVQRDDD) are LID. Arginine 130 lines the ATP pocket. Positions 133 and 136 each coordinate Zn(2+). An ATP-binding site is contributed by 139 to 140 (IY). Residues cysteine 153 and cysteine 156 each contribute to the Zn(2+) site. 2 residues coordinate AMP: arginine 163 and arginine 174. Position 202 (isoleucine 202) interacts with ATP.

The protein belongs to the adenylate kinase family. In terms of assembly, monomer.

It localises to the cytoplasm. It catalyses the reaction AMP + ATP = 2 ADP. It participates in purine metabolism; AMP biosynthesis via salvage pathway; AMP from ADP: step 1/1. Functionally, catalyzes the reversible transfer of the terminal phosphate group between ATP and AMP. Plays an important role in cellular energy homeostasis and in adenine nucleotide metabolism. This is Adenylate kinase from Thermotoga neapolitana.